Reading from the N-terminus, the 349-residue chain is Protein RecA (349 aa).

G64–T71 is a binding site for ATP. The disordered stretch occupies residues N328–K349. Positions I331 to K349 are enriched in acidic residues.

The protein belongs to the RecA family.

It localises to the cytoplasm. Can catalyze the hydrolysis of ATP in the presence of single-stranded DNA, the ATP-dependent uptake of single-stranded DNA by duplex DNA, and the ATP-dependent hybridization of homologous single-stranded DNAs. It interacts with LexA causing its activation and leading to its autocatalytic cleavage. The protein is Protein RecA of Halalkalibacterium halodurans (strain ATCC BAA-125 / DSM 18197 / FERM 7344 / JCM 9153 / C-125) (Bacillus halodurans).